A 506-amino-acid polypeptide reads, in one-letter code: H/ACA ribonucleoprotein complex subunit DKC1 (506 aa).

The segment at 1-26 (MADTESKKEKKRKSKKISDEEVGDIQ) is disordered. Aspartate 120 serves as the catalytic Nucleophile. In terms of domain architecture, PUA spans 291–366 (HKRIVMKDSA…VVAKIKRVIM (76 aa)). Disordered stretches follow at residues 391–410 (GLLD…WKEG) and 419–506 (VKKG…ADSD). A compositionally biased stretch (basic and acidic residues) spans 421 to 434 (KGGEASAKRKRDES). Residues 457-466 (EKKKKKKEKK) show a composition bias toward basic residues.

It belongs to the pseudouridine synthase TruB family. In terms of assembly, part of the H/ACA small nucleolar ribonucleoprotein (H/ACA snoRNP) complex. The complex binds a box H/ACA small nucleolar RNA (snoRNA), which may target the specific site of modification within the RNA substrate.

It is found in the nucleus. The protein resides in the nucleolus. It localises to the cajal body. It catalyses the reaction uridine in 5S rRNA = pseudouridine in 5S rRNA. Catalytic subunit of H/ACA small nucleolar ribonucleoprotein (H/ACA snoRNP) complex, which catalyzes pseudouridylation of rRNA. This involves the isomerization of uridine such that the ribose is subsequently attached to C5, instead of the normal N1. Pseudouridine ('psi') residues may serve to stabilize the conformation of rRNAs. Required for ribosome biogenesis and telomere maintenance. The polypeptide is H/ACA ribonucleoprotein complex subunit DKC1 (Danio rerio (Zebrafish)).